The chain runs to 199 residues: Proteasome subunit beta type-2 (199 aa).

Belongs to the peptidase T1B family. The 26S proteasome consists of a 20S proteasome core and two 19S regulatory subunits. The 20S proteasome core is composed of 28 subunits that are arranged in four stacked rings, resulting in a barrel-shaped structure. The two end rings are each formed by seven alpha subunits, and the two central rings are each formed by seven beta subunits. The catalytic chamber with the active sites is on the inside of the barrel.

Its subcellular location is the cytoplasm. It is found in the nucleus. Non-catalytic component of the proteasome, a multicatalytic proteinase complex which is characterized by its ability to cleave peptides with Arg, Phe, Tyr, Leu, and Glu adjacent to the leaving group at neutral or slightly basic pH. The proteasome has an ATP-dependent proteolytic activity. The protein is Proteasome subunit beta type-2 (pbs-4) of Caenorhabditis elegans.